Reading from the N-terminus, the 25-residue chain is Granule-bound starch synthase 1, chloroplastic/amyloplastic (25 aa).

Position 16 (Lys16) interacts with ADP-alpha-D-glucose.

It belongs to the glycosyltransferase 1 family. Bacterial/plant glycogen synthase subfamily. As to expression, expressed in endosperm.

The protein localises to the plastid. It is found in the chloroplast. The protein resides in the amyloplast. The enzyme catalyses an NDP-alpha-D-glucose + [(1-&gt;4)-alpha-D-glucosyl](n) = [(1-&gt;4)-alpha-D-glucosyl](n+1) + a ribonucleoside 5'-diphosphate + H(+). It participates in glycan biosynthesis; starch biosynthesis. In terms of biological role, required for the synthesis of amylose in endosperm. This is Granule-bound starch synthase 1, chloroplastic/amyloplastic from Fagopyrum esculentum (Common buckwheat).